The chain runs to 207 residues: Ankyrin repeat-containing protein P1E11.10 (207 aa).

ANK repeat units lie at residues 36–65 (NGYT…DINI) and 69–98 (DGET…TVKN).

Its subcellular location is the cytoplasm. It is found in the nucleus. The protein is Ankyrin repeat-containing protein P1E11.10 of Schizosaccharomyces pombe (strain 972 / ATCC 24843) (Fission yeast).